A 286-amino-acid polypeptide reads, in one-letter code: Rhomboid-type serine protease 2 (286 aa).

6 helical membrane passes run 18–38 (ITQY…LLVI), 66–86 (SFYL…VGLF), 99–119 (VFTG…FCIV), 122–142 (LLYP…FMSF), 164–183 (VSIP…MVLI), and 188–210 (FWGH…KFLY). The active-site Nucleophile is the S133. Residue H191 is part of the active site.

Belongs to the peptidase S54 family.

Its subcellular location is the golgi apparatus membrane. It localises to the golgi apparatus. It is found in the cis-Golgi network membrane. The enzyme catalyses Cleaves type-1 transmembrane domains using a catalytic dyad composed of serine and histidine that are contributed by different transmembrane domains.. In terms of biological role, probable rhomboid-type serine protease that catalyzes intramembrane proteolysis. The chain is Rhomboid-type serine protease 2 (RBD2) from Debaryomyces hansenii (strain ATCC 36239 / CBS 767 / BCRC 21394 / JCM 1990 / NBRC 0083 / IGC 2968) (Yeast).